A 454-amino-acid polypeptide reads, in one-letter code: Ribosomal protein uS12 methylthiotransferase RimO (454 aa).

The 112-residue stretch at S14–Q125 folds into the MTTase N-terminal domain. Residues C23, C59, C88, C163, C167, and C170 each contribute to the [4Fe-4S] cluster site. One can recognise a Radical SAM core domain in the interval D149–D378. The 72-residue stretch at Q381–K452 folds into the TRAM domain.

Belongs to the methylthiotransferase family. RimO subfamily. [4Fe-4S] cluster serves as cofactor.

The protein localises to the cytoplasm. The enzyme catalyses L-aspartate(89)-[ribosomal protein uS12]-hydrogen + (sulfur carrier)-SH + AH2 + 2 S-adenosyl-L-methionine = 3-methylsulfanyl-L-aspartate(89)-[ribosomal protein uS12]-hydrogen + (sulfur carrier)-H + 5'-deoxyadenosine + L-methionine + A + S-adenosyl-L-homocysteine + 2 H(+). Its function is as follows. Catalyzes the methylthiolation of an aspartic acid residue of ribosomal protein uS12. The chain is Ribosomal protein uS12 methylthiotransferase RimO from Prochlorococcus marinus (strain AS9601).